Here is a 361-residue protein sequence, read N- to C-terminus: Histidinol-phosphate aminotransferase (361 aa).

Lys-221 carries the N6-(pyridoxal phosphate)lysine modification.

It belongs to the class-II pyridoxal-phosphate-dependent aminotransferase family. Histidinol-phosphate aminotransferase subfamily. Pyridoxal 5'-phosphate is required as a cofactor.

It carries out the reaction L-histidinol phosphate + 2-oxoglutarate = 3-(imidazol-4-yl)-2-oxopropyl phosphate + L-glutamate. Its pathway is amino-acid biosynthesis; L-histidine biosynthesis; L-histidine from 5-phospho-alpha-D-ribose 1-diphosphate: step 7/9. This Methanocella arvoryzae (strain DSM 22066 / NBRC 105507 / MRE50) protein is Histidinol-phosphate aminotransferase.